The primary structure comprises 262 residues: NADPH-dependent 7-cyano-7-deazaguanine reductase (262 aa).

69–71 (IES) serves as a coordination point for substrate. 71–72 (SK) is an NADPH binding site. The active-site Thioimide intermediate is Cys-170. Catalysis depends on Asp-177, which acts as the Proton donor. 209 to 210 (HE) is a substrate binding site. 238-239 (RG) serves as a coordination point for NADPH.

This sequence belongs to the GTP cyclohydrolase I family. QueF type 2 subfamily. Homodimer.

The protein resides in the cytoplasm. The catalysed reaction is 7-aminomethyl-7-carbaguanine + 2 NADP(+) = 7-cyano-7-deazaguanine + 2 NADPH + 3 H(+). Its pathway is tRNA modification; tRNA-queuosine biosynthesis. Its function is as follows. Catalyzes the NADPH-dependent reduction of 7-cyano-7-deazaguanine (preQ0) to 7-aminomethyl-7-deazaguanine (preQ1). The chain is NADPH-dependent 7-cyano-7-deazaguanine reductase from Buchnera aphidicola subsp. Schizaphis graminum (strain Sg).